Reading from the N-terminus, the 163-residue chain is Phosphopantetheine adenylyltransferase (163 aa).

Threonine 10 is a binding site for substrate. ATP is bound by residues 10-11 and histidine 18; that span reads TF. Substrate-binding residues include lysine 42, leucine 74, and arginine 88. Residues 89-91, glutamate 99, and 124-130 each bind ATP; these read GLR and NSFISST.

This sequence belongs to the bacterial CoaD family. Homohexamer. Mg(2+) serves as cofactor.

The protein localises to the cytoplasm. It catalyses the reaction (R)-4'-phosphopantetheine + ATP + H(+) = 3'-dephospho-CoA + diphosphate. The protein operates within cofactor biosynthesis; coenzyme A biosynthesis; CoA from (R)-pantothenate: step 4/5. Reversibly transfers an adenylyl group from ATP to 4'-phosphopantetheine, yielding dephospho-CoA (dPCoA) and pyrophosphate. The protein is Phosphopantetheine adenylyltransferase of Shewanella baltica (strain OS155 / ATCC BAA-1091).